Here is a 338-residue protein sequence, read N- to C-terminus: MAASQVLGEKINILSGETVKAGDRDPLGNDCPEQDRLPQRSWRQKCASYVLALRPWSFSASLTPVALGSALAYRSHGVLDPRLLVGCAVAVLAVHGAGNLVNTYYDFSKGIDHKKSDDRTLVDRILEPQDVVRFGVFLYTLGCVCAACLYYLSPLKLEHLALIYFGGLSGSFLYTGGIGFKYVALGDLIILITFGPLAVMFAYAIQVGSLAIFPLVYAIPLALSTEAILHSNNTRDMESDREAGIVTLAILIGPTFSYILYNTLLFLPYLVFSILATHCTISLALPLLTIPMAFSLERQFRSQAFNKLPQRTAKLNLLLGLFYVFGIILAPAGSLPKI.

An N-acetylalanine modification is found at Ala-2. 8 helical membrane-spanning segments follow: residues 83 to 103 (LLVGCAVAVLAVHGAGNLVNT), 134 to 154 (FGVFLYTLGCVCAACLYYLSP), 160 to 180 (LALIYFGGLSGSFLYTGGIGF), 188 to 208 (LIILITFGPLAVMFAYAIQVG), 209 to 229 (SLAIFPLVYAIPLALSTEAIL), 245 to 267 (IVTLAILIGPTFSYILYNTLLFL), 277 to 297 (THCTISLALPLLTIPMAFSLE), and 315 to 335 (LNLLLGLFYVFGIILAPAGSL).

It belongs to the UbiA prenyltransferase family. In terms of assembly, interacts with HMGCR and SOAT1. Ubiquitously expressed.

It localises to the endoplasmic reticulum membrane. The protein localises to the golgi apparatus membrane. Its subcellular location is the mitochondrion membrane. It is found in the cytoplasm. The protein resides in the nucleus. The enzyme catalyses menadiol + (2E,6E,10E)-geranylgeranyl diphosphate = menaquinol-4 + diphosphate. It carries out the reaction all-trans-decaprenyl diphosphate + 4-hydroxybenzoate = 4-hydroxy-3-(all-trans-decaprenyl)benzoate + diphosphate. The protein operates within quinol/quinone metabolism; menaquinone biosynthesis. It participates in cofactor biosynthesis; ubiquinone biosynthesis. In terms of biological role, prenyltransferase that mediates the formation of menaquinone-4 (MK-4) and coenzyme Q10. MK-4 is a vitamin K2 isoform present at high concentrations in the brain, kidney and pancreas, and is required for endothelial cell development. Mediates the conversion of phylloquinone (PK) into MK-4, probably by cleaving the side chain of phylloquinone (PK) to release 2-methyl-1,4-naphthoquinone (menadione; K3) and then prenylating it with geranylgeranyl pyrophosphate (GGPP) to form MK-4. Also plays a role in cardiovascular development independently of MK-4 biosynthesis, by acting as a coenzyme Q10 biosynthetic enzyme: coenzyme Q10, also named ubiquinone, plays an important antioxidant role in the cardiovascular system. Mediates biosynthesis of coenzyme Q10 in the Golgi membrane, leading to protect cardiovascular tissues from NOS3/eNOS-dependent oxidative stress. This is UbiA prenyltransferase domain-containing protein 1 from Homo sapiens (Human).